A 348-amino-acid polypeptide reads, in one-letter code: Holliday junction branch migration complex subunit RuvB (348 aa).

The interval 1-20 is disordered; it reads MKPPARMVSPERRSDDVGDT. Residues 1-183 are large ATPase domain (RuvB-L); the sequence is MKPPARMVSP…FGIPIRLNFY (183 aa). ATP-binding positions include Leu22, Arg23, Gly64, Lys67, Thr68, Thr69, 130 to 132, Arg173, Tyr183, and Arg220; that span reads EDF. Thr68 serves as a coordination point for Mg(2+). A small ATPAse domain (RuvB-S) region spans residues 184 to 254; it reads TVEELEGIVT…IADHALSALE (71 aa). The tract at residues 257–348 is head domain (RuvB-H); it reads AAGLDAMDRR…QIGLFGNDDD (92 aa). 3 residues coordinate DNA: Arg293, Arg312, and Arg317.

It belongs to the RuvB family. Homohexamer. Forms an RuvA(8)-RuvB(12)-Holliday junction (HJ) complex. HJ DNA is sandwiched between 2 RuvA tetramers; dsDNA enters through RuvA and exits via RuvB. An RuvB hexamer assembles on each DNA strand where it exits the tetramer. Each RuvB hexamer is contacted by two RuvA subunits (via domain III) on 2 adjacent RuvB subunits; this complex drives branch migration. In the full resolvosome a probable DNA-RuvA(4)-RuvB(12)-RuvC(2) complex forms which resolves the HJ.

The protein resides in the cytoplasm. The catalysed reaction is ATP + H2O = ADP + phosphate + H(+). Its function is as follows. The RuvA-RuvB-RuvC complex processes Holliday junction (HJ) DNA during genetic recombination and DNA repair, while the RuvA-RuvB complex plays an important role in the rescue of blocked DNA replication forks via replication fork reversal (RFR). RuvA specifically binds to HJ cruciform DNA, conferring on it an open structure. The RuvB hexamer acts as an ATP-dependent pump, pulling dsDNA into and through the RuvAB complex. RuvB forms 2 homohexamers on either side of HJ DNA bound by 1 or 2 RuvA tetramers; 4 subunits per hexamer contact DNA at a time. Coordinated motions by a converter formed by DNA-disengaged RuvB subunits stimulates ATP hydrolysis and nucleotide exchange. Immobilization of the converter enables RuvB to convert the ATP-contained energy into a lever motion, pulling 2 nucleotides of DNA out of the RuvA tetramer per ATP hydrolyzed, thus driving DNA branch migration. The RuvB motors rotate together with the DNA substrate, which together with the progressing nucleotide cycle form the mechanistic basis for DNA recombination by continuous HJ branch migration. Branch migration allows RuvC to scan DNA until it finds its consensus sequence, where it cleaves and resolves cruciform DNA. The polypeptide is Holliday junction branch migration complex subunit RuvB (Bradyrhizobium sp. (strain ORS 278)).